A 79-amino-acid chain; its full sequence is ATP synthase subunit c (79 aa).

The next 2 membrane-spanning stretches (helical) occupy residues 11-31 and 53-73; these read MAAA…IGIL and FFIV…LGLY.

The protein belongs to the ATPase C chain family. As to quaternary structure, F-type ATPases have 2 components, F(1) - the catalytic core - and F(0) - the membrane proton channel. F(1) has five subunits: alpha(3), beta(3), gamma(1), delta(1), epsilon(1). F(0) has three main subunits: a(1), b(2) and c(10-14). The alpha and beta chains form an alternating ring which encloses part of the gamma chain. F(1) is attached to F(0) by a central stalk formed by the gamma and epsilon chains, while a peripheral stalk is formed by the delta and b chains.

It localises to the cell inner membrane. In terms of biological role, f(1)F(0) ATP synthase produces ATP from ADP in the presence of a proton or sodium gradient. F-type ATPases consist of two structural domains, F(1) containing the extramembraneous catalytic core and F(0) containing the membrane proton channel, linked together by a central stalk and a peripheral stalk. During catalysis, ATP synthesis in the catalytic domain of F(1) is coupled via a rotary mechanism of the central stalk subunits to proton translocation. Key component of the F(0) channel; it plays a direct role in translocation across the membrane. A homomeric c-ring of between 10-14 subunits forms the central stalk rotor element with the F(1) delta and epsilon subunits. The polypeptide is ATP synthase subunit c (Pectobacterium atrosepticum (strain SCRI 1043 / ATCC BAA-672) (Erwinia carotovora subsp. atroseptica)).